Consider the following 126-residue polypeptide: uncharacterized protein (126 aa).

In terms of domain architecture, HTH hxlR-type spans 8–106; that stretch reads ISVEATLEVI…WGANHINRVY (99 aa).

This is an uncharacterized protein from Bacillus subtilis (strain 168).